Reading from the N-terminus, the 157-residue chain is Rieske domain-containing protein (157 aa).

Met1 carries the post-translational modification N-acetylmethionine. Ser6 bears the Phosphoserine mark. Rieske domains lie at 16 to 127 and 17 to 131; these read TSVC…VDNG and SVCV…NIYV. Residues Cys57, His59, Cys80, and His83 each contribute to the [2Fe-2S] cluster site.

[2Fe-2S] cluster is required as a cofactor.

This chain is Rieske domain-containing protein (Rfesd), found in Mus musculus (Mouse).